A 113-amino-acid polypeptide reads, in one-letter code: Probable mesentericin-Y105 immunity protein (113 aa).

It belongs to the immunity protein EntA family.

In terms of biological role, imparts immunity to mesentericin-Y105 to naturally sensitive host strains. In Leuconostoc mesenteroides, this protein is Probable mesentericin-Y105 immunity protein (mesI).